The following is a 100-amino-acid chain: UPF0251 protein swp_0615 (100 aa).

It belongs to the UPF0251 family.

The polypeptide is UPF0251 protein swp_0615 (Shewanella piezotolerans (strain WP3 / JCM 13877)).